The chain runs to 757 residues: Transmembrane channel-like protein 1 (757 aa).

Residues methionine 1 to glutamate 74 are disordered. Residues methionine 1–glycine 176 are Cytoplasmic-facing. Over residues glutamate 8–aspartate 23 the composition is skewed to acidic residues. Residue serine 30 is modified to Phosphoserine. Residue threonine 38 is modified to Phosphothreonine. Over residues asparagine 43–glutamate 54 the composition is skewed to acidic residues. The required for interaction with CIB2 stretch occupies residues glutamate 81–lysine 130. Serine 122 carries the post-translational modification Phosphoserine. The chain crosses the membrane as a helical span at residues serine 177–proline 214. The Extracellular portion of the chain corresponds to tyrosine 215–phenylalanine 265. The chain crosses the membrane as a helical span at residues arginine 266–aspartate 297. Residues glycine 298–isoleucine 352 form a required for interaction with CIB2 region. Residues glycine 298 to histidine 353 lie on the Cytoplasmic side of the membrane. Position 308 is a phosphoserine (serine 308). Residues leucine 354–serine 384 form a helical membrane-spanning segment. Over glutamine 385–glycine 396 the chain is Extracellular. The residue at position 394 (threonine 394) is a Phosphothreonine. A helical membrane pass occupies residues tryptophan 397 to leucine 424. At glutamate 425 to histidine 428 the chain is on the cytoplasmic side. Residues proline 429–isoleucine 463 form a helical membrane-spanning segment. The Extracellular segment spans residues glutamate 464 to cysteine 512. The chain crosses the membrane as a helical span at residues tryptophan 513–cysteine 550. Residues asparagine 551 to aspartate 569 are Cytoplasmic-facing. Residues isoleucine 570–phenylalanine 590 form a helical membrane-spanning segment. Over alanine 591–serine 593 the chain is Extracellular. Residues leucine 594–cysteine 616 form a helical membrane-spanning segment. Over asparagine 617 to asparagine 630 the chain is Cytoplasmic. Residues asparagine 631–serine 654 form a helical membrane-spanning segment. The Extracellular segment spans residues leucine 655 to glycine 697. Residues leucine 698–methionine 731 traverse the membrane as a helical segment. Residues lysine 732–glutamine 757 are Cytoplasmic-facing.

Belongs to the TMC family. As to quaternary structure, forms the MET channel composed of TMC dimer (TMC1 or TMC2), TMIE, TOMT, CIB (CIB2 or CIB3), LHFPL5 and PCDH15. Interacts with PIEZO1 and PIEZO2; the interaction may be part of the MET complex. The interaction of TMC1 and TMC2 with TOMT is required for the transportation of TMC1/2 into the stereocilia of hair cells. Interacts (via N-terminus) with both isoforms CD1 and CD3 of PCDH15. Can form a heterodimer with TMC2, TMC5 or TMC7. In terms of tissue distribution, detected in cochlear inner and outer hair cells and in neurosensory epithelia of the vestibular end organs. Also expressed in cortex, cerebellum, eye, colon, ovary and testis.

It localises to the cell membrane. It catalyses the reaction Ca(2+)(in) = Ca(2+)(out). Functionally, pore-forming subunit of the mechanotransducer (MET) non-selective cation channel complex located at the tips of stereocilia of cochlear hair cells and that mediates sensory transduction in the auditory system. The MET complex is composed of two dimeric pore-forming ion-conducting transmembrane TMC (TMC1 or TMC2) subunits, several auxiliary proteins including LHFPL5, TMIE, CIB2/3 and TOMT, the tip-link PCDH15, and possibly the PIEZO subunits. MET channel is activated by tension in the tip-link extending from the side wall of one stereocilium to the tip of the adjacent shorter stereocilium, where the channel is located. TMC1 MET channel is highly permeable to calcium and likely transports monovalent cations. Also involved in vestibular hair cells transduction current. This chain is Transmembrane channel-like protein 1, found in Mus musculus (Mouse).